The sequence spans 143 residues: Transcriptional regulator MraZ (143 aa).

SpoVT-AbrB domains are found at residues 5 to 47 (EYQH…PLTE) and 76 to 119 (AMEG…AKER).

The protein belongs to the MraZ family. In terms of assembly, forms oligomers.

The protein localises to the cytoplasm. It is found in the nucleoid. The sequence is that of Transcriptional regulator MraZ from Lactobacillus delbrueckii subsp. bulgaricus (strain ATCC 11842 / DSM 20081 / BCRC 10696 / JCM 1002 / NBRC 13953 / NCIMB 11778 / NCTC 12712 / WDCM 00102 / Lb 14).